Consider the following 277-residue polypeptide: Serine protease 33 (277 aa).

Positions 1–24 are cleaved as a signal peptide; it reads MRGASHLQILLLLVLGTRMQECAA. The Peptidase S1 domain occupies 34-276; sequence IVGGRDAQDG…YSPWIQARLS (243 aa). Residues Cys-59 and Cys-75 are joined by a disulfide bond. Catalysis depends on charge relay system residues His-74 and Asp-123. Cystine bridges form between Cys-157–Cys-234, Cys-190–Cys-213, and Cys-224–Cys-252. The active-site Charge relay system is the Ser-228.

Belongs to the peptidase S1 family. Not glycosylated. In terms of tissue distribution, widely expressed.

It localises to the secreted. Functionally, serine protease that has amidolytic activity, cleaving its substrates before Arg residues. The polypeptide is Serine protease 33 (Prss33) (Mus musculus (Mouse)).